We begin with the raw amino-acid sequence, 121 residues long: MMKVALIAHDDKKDDLLAFVKTHREFFARHELFATGTTGKIISENTGLTVHRFLSGPLGGDQQIGAMVAAGEIKLVIFFRDPLTAQPHEPDITALLRVCDVHNVPIATNWSSAELFLRALN.

Residues 1 to 121 form the MGS-like domain; that stretch reads MMKVALIAHD…SAELFLRALN (121 aa). Substrate is bound by residues H9, K13, 35 to 38, and 55 to 56; these read TGTT and SG. D61 (proton donor/acceptor) is an active-site residue. H88 contacts substrate.

It belongs to the methylglyoxal synthase family.

It carries out the reaction dihydroxyacetone phosphate = methylglyoxal + phosphate. Functionally, catalyzes the formation of methylglyoxal from dihydroxyacetone phosphate. This is Methylglyoxal synthase from Carboxydothermus hydrogenoformans (strain ATCC BAA-161 / DSM 6008 / Z-2901).